We begin with the raw amino-acid sequence, 592 residues long: Probable oxidoreductase EphD (592 aa).

The AB hydrolase-1 domain maps to 30-286; sequence PTVVLVHGFP…KAGHFSPMSH (257 aa). Ser-461 contacts substrate. Residue Tyr-474 is the Proton acceptor of the active site.

It belongs to the short-chain dehydrogenases/reductases (SDR) family.

This is Probable oxidoreductase EphD (ephD) from Mycobacterium bovis (strain ATCC BAA-935 / AF2122/97).